The following is a 106-amino-acid chain: Small ribosomal subunit protein uS10 (106 aa).

It belongs to the universal ribosomal protein uS10 family. Part of the 30S ribosomal subunit.

Involved in the binding of tRNA to the ribosomes. The sequence is that of Small ribosomal subunit protein uS10 from Prochlorococcus marinus (strain MIT 9211).